The following is a 178-amino-acid chain: Large ribosomal subunit protein uL6 (178 aa).

The interval 159–178 is disordered; that stretch reads GKGIRYEGEHVRRKEGKTGK.

It belongs to the universal ribosomal protein uL6 family. Part of the 50S ribosomal subunit.

Functionally, this protein binds to the 23S rRNA, and is important in its secondary structure. It is located near the subunit interface in the base of the L7/L12 stalk, and near the tRNA binding site of the peptidyltransferase center. In Listeria monocytogenes serotype 4b (strain CLIP80459), this protein is Large ribosomal subunit protein uL6.